The primary structure comprises 754 residues: 5-methyltetrahydropteroyltriglutamate--homocysteine methyltransferase (754 aa).

Residues 17-20 (RELK) and Lys-117 contribute to the 5-methyltetrahydropteroyltri-L-glutamate site. L-homocysteine is bound by residues 431–433 (IGS) and Glu-484. Residues 431 to 433 (IGS) and Glu-484 contribute to the L-methionine site. 5-methyltetrahydropteroyltri-L-glutamate-binding positions include 515–516 (RC) and Trp-561. Residue Asp-599 participates in L-homocysteine binding. Asp-599 contributes to the L-methionine binding site. Glu-605 contacts 5-methyltetrahydropteroyltri-L-glutamate. Zn(2+) contacts are provided by His-641, Cys-643, and Glu-665. His-694 functions as the Proton donor in the catalytic mechanism. Residue Cys-726 coordinates Zn(2+).

The protein belongs to the vitamin-B12 independent methionine synthase family. It depends on Zn(2+) as a cofactor.

It catalyses the reaction 5-methyltetrahydropteroyltri-L-glutamate + L-homocysteine = tetrahydropteroyltri-L-glutamate + L-methionine. Its pathway is amino-acid biosynthesis; L-methionine biosynthesis via de novo pathway; L-methionine from L-homocysteine (MetE route): step 1/1. In terms of biological role, catalyzes the transfer of a methyl group from 5-methyltetrahydrofolate to homocysteine resulting in methionine formation. This Salmonella typhi protein is 5-methyltetrahydropteroyltriglutamate--homocysteine methyltransferase.